We begin with the raw amino-acid sequence, 1568 residues long: Plexin-C1 (1568 aa).

The signal sequence occupies residues 1–34 (MEVSRRKAPPRPPRPAAPLPLLAYLLALAAPGRG). The 418-residue stretch at 35 to 452 (ADEPVWRSEQ…AGKEVRRIRV (418 aa)) folds into the Sema domain. At 35–944 (ADEPVWRSEQ…YVEQESVPST (910 aa)) the chain is on the extracellular side. Cysteines 64 and 87 form a disulfide. N-linked (GlcNAc...) asparagine glycans are attached at residues Asn86, Asn141, and Asn149. 3 disulfides stabilise this stretch: Cys156-Cys194, Cys226-Cys354, and Cys283-Cys329. N-linked (GlcNAc...) asparagine glycans are attached at residues Asn241 and Asn252. N-linked (GlcNAc...) asparagine glycans are attached at residues Asn386 and Asn407. Disulfide bonds link Cys455–Cys472, Cys461–Cys506, Cys464–Cys481, and Cys475–Cys487. N-linked (GlcNAc...) asparagine glycans are attached at residues Asn548, Asn582, Asn653, Asn692, Asn771, Asn796, Asn821, Asn871, and Asn890. A helical transmembrane segment spans residues 945-965 (WYFLIVLPVLLVIVIFAAVGV). The Cytoplasmic segment spans residues 966 to 1568 (TRHKSKELSR…FDEKKKCKWM (603 aa)). Ser978 bears the Phosphoserine mark.

It belongs to the plexin family. As to quaternary structure, monomer. Homodimer. Interacts with SEMA7A. In terms of processing, N-glycosylated. In terms of tissue distribution, detected in heart, brain, lung, spleen and placenta.

The protein resides in the membrane. In terms of biological role, receptor for SEMA7A, for smallpox semaphorin A39R, vaccinia virus semaphorin A39R and for herpesvirus Sema protein. Binding of semaphorins triggers cellular responses leading to the rearrangement of the cytoskeleton and to secretion of IL6 and IL8. In Homo sapiens (Human), this protein is Plexin-C1 (PLXNC1).